The following is a 277-amino-acid chain: Energy-coupling factor transporter ATP-binding protein EcfA1 (277 aa).

In terms of domain architecture, ABC transporter spans 5 to 240; it reads LEVENLVFKY…SEDMVEIGLD (236 aa). 40–47 serves as a coordination point for ATP; the sequence is GQNGSGKS.

The protein belongs to the ABC transporter superfamily. Energy-coupling factor EcfA family. As to quaternary structure, forms a stable energy-coupling factor (ECF) transporter complex composed of 2 membrane-embedded substrate-binding proteins (S component), 2 ATP-binding proteins (A component) and 2 transmembrane proteins (T component).

The protein resides in the cell membrane. In terms of biological role, ATP-binding (A) component of a common energy-coupling factor (ECF) ABC-transporter complex. Unlike classic ABC transporters this ECF transporter provides the energy necessary to transport a number of different substrates. The chain is Energy-coupling factor transporter ATP-binding protein EcfA1 from Lactococcus lactis subsp. lactis (strain IL1403) (Streptococcus lactis).